A 330-amino-acid polypeptide reads, in one-letter code: Diacylglycerol acyltransferase/mycolyltransferase Ag85B (330 aa).

The N-terminal stretch at 1 to 40 (MTDLSKKVRAWGRRLLVGTAAAVTLPGLIGLAGGAPTAGA) is a signal peptide. 82–83 (LR) contacts substrate. The segment at 98–108 (FEWYYQSGLSI) is fibronectin-binding. Cys127 and Cys132 are disulfide-bonded. Ser166 and Asp194 together coordinate substrate. Residue Ser166 is the Nucleophile of the active site. The active site involves Glu270. Substrate-binding positions include 272-275 (FVRS), Lys279, and 302-304 (HSW). Residue His302 is part of the active site.

This sequence belongs to the mycobacterial A85 antigen family.

It is found in the secreted. It carries out the reaction 2 alpha,alpha'-trehalose 6-mycolate = alpha,alpha'-trehalose 6,6'-bismycolate + alpha,alpha-trehalose. The catalysed reaction is an acyl-CoA + a 1,2-diacyl-sn-glycerol = a triacyl-sn-glycerol + CoA. Its function is as follows. The antigen 85 proteins (FbpA, FbpB, FbpC) are responsible for the high affinity of mycobacteria for fibronectin, a large adhesive glycoprotein, which facilitates the attachment of M.tuberculosis to murine alveolar macrophages (AMs). They also help to maintain the integrity of the cell wall by catalyzing the transfer of mycolic acids to cell wall arabinogalactan and through the synthesis of alpha,alpha-trehalose dimycolate (TDM, cord factor). They catalyze the transfer of a mycoloyl residue from one molecule of alpha,alpha-trehalose monomycolate (TMM) to another TMM, leading to the formation of TDM. This chain is Diacylglycerol acyltransferase/mycolyltransferase Ag85B (fbpB), found in Mycobacterium scrofulaceum.